A 307-amino-acid chain; its full sequence is Ribosomal protein L11 methyltransferase (307 aa).

S-adenosyl-L-methionine-binding residues include threonine 162, glycine 183, aspartate 205, and asparagine 244.

Belongs to the methyltransferase superfamily. PrmA family.

It is found in the cytoplasm. The enzyme catalyses L-lysyl-[protein] + 3 S-adenosyl-L-methionine = N(6),N(6),N(6)-trimethyl-L-lysyl-[protein] + 3 S-adenosyl-L-homocysteine + 3 H(+). Its function is as follows. Methylates ribosomal protein L11. This Bordetella bronchiseptica (strain ATCC BAA-588 / NCTC 13252 / RB50) (Alcaligenes bronchisepticus) protein is Ribosomal protein L11 methyltransferase.